A 103-amino-acid chain; its full sequence is uncharacterized protein (103 aa).

This is an uncharacterized protein from Saccharomyces cerevisiae (strain ATCC 204508 / S288c) (Baker's yeast).